The chain runs to 278 residues: Dermonecrotic toxin LlSicTox-alphaIII3iii (278 aa).

The active site involves His-5. Mg(2+) is bound by residues Glu-25 and Asp-27. His-40 functions as the Nucleophile in the catalytic mechanism. Residues Cys-44 and Cys-50 are joined by a disulfide bond. Asp-84 lines the Mg(2+) pocket.

Belongs to the arthropod phospholipase D family. Class I subfamily. Mg(2+) serves as cofactor. Expressed by the venom gland.

It localises to the secreted. It carries out the reaction an N-(acyl)-sphingosylphosphocholine = an N-(acyl)-sphingosyl-1,3-cyclic phosphate + choline. It catalyses the reaction an N-(acyl)-sphingosylphosphoethanolamine = an N-(acyl)-sphingosyl-1,3-cyclic phosphate + ethanolamine. The catalysed reaction is a 1-acyl-sn-glycero-3-phosphocholine = a 1-acyl-sn-glycero-2,3-cyclic phosphate + choline. The enzyme catalyses a 1-acyl-sn-glycero-3-phosphoethanolamine = a 1-acyl-sn-glycero-2,3-cyclic phosphate + ethanolamine. Dermonecrotic toxins cleave the phosphodiester linkage between the phosphate and headgroup of certain phospholipids (sphingolipid and lysolipid substrates), forming an alcohol (often choline) and a cyclic phosphate. This toxin acts on sphingomyelin (SM). It may also act on ceramide phosphoethanolamine (CPE), lysophosphatidylcholine (LPC) and lysophosphatidylethanolamine (LPE), but not on lysophosphatidylserine (LPS), and lysophosphatidylglycerol (LPG). It acts by transphosphatidylation, releasing exclusively cyclic phosphate products as second products. Induces dermonecrosis, hemolysis, increased vascular permeability, edema, inflammatory response, and platelet aggregation. This is Dermonecrotic toxin LlSicTox-alphaIII3iii from Loxosceles laeta (South American recluse spider).